We begin with the raw amino-acid sequence, 365 residues long: Phosphatidylcholine:ceramide cholinephosphotransferase 2 (365 aa).

Residues 9-50 form a disordered region; sequence LEGHLESQTNDSTNTYTSPTEAVEEEGKNGKGKPKTLSNGLR. Residues 14–28 are compositionally biased toward polar residues; the sequence is ESQTNDSTNTYTSPT. The next 5 helical transmembrane spans lie at 80–100, 128–148, 159–179, 219–239, and 248–268; these read GIAF…ITVV, FSVS…QWLF, FFFI…VTTL, ILCG…TYLF, and FWWY…CILV. His229 is a catalytic residue. Active-site residues include His272 and Asp276. The helical transmembrane segment at 273 to 290 threads the bilayer; it reads YTVDVIIAYYITTRLFWW. Topologically, residues 291–365 are cytoplasmic; the sequence is YHSMANEKNL…KIGEDNEKST (75 aa). S-palmitoyl cysteine attachment occurs at residues Cys331, Cys332, Cys343, and Cys348.

Belongs to the sphingomyelin synthase family. Post-translationally, palmitoylated on Cys-331, Cys-332, Cys-343 and Cys-348; which plays an important role in plasma membrane localization. Highest expression is detected in cortical bone, followed by vertebrae, kidney and liver. Expression levels are very low in spleen, muscle, heart, brown fat and thymus. Expressed in macrophages.

It localises to the cell membrane. Its subcellular location is the golgi apparatus membrane. It carries out the reaction an N-acylsphing-4-enine + a 1,2-diacyl-sn-glycero-3-phosphocholine = a sphingomyelin + a 1,2-diacyl-sn-glycerol. The enzyme catalyses an N-acylsphinganine + a 1,2-diacyl-sn-glycero-3-phosphocholine = an N-acylsphinganine-1-phosphocholine + a 1,2-diacyl-sn-glycerol. The catalysed reaction is an N-acyl-(4R)-4-hydroxysphinganine + a 1,2-diacyl-sn-glycero-3-phosphocholine = an N-acyl-(4R)-4-hydroxysphinganine-phosphocholine + a 1,2-diacyl-sn-glycerol. It catalyses the reaction an N-acylsphing-4-enine + a 1,2-diacyl-sn-glycero-3-phosphoethanolamine = an N-acylsphing-4-enine 1-phosphoethanolamine + a 1,2-diacyl-sn-glycerol. It carries out the reaction an N-acylsphinganine + a 1,2-diacyl-sn-glycero-3-phosphoethanolamine = an N-acylsphinganine-1-phosphoethanolamine + a 1,2-diacyl-sn-glycerol. The enzyme catalyses an N-acyl-(4R)-4-hydroxysphinganine + a 1,2-diacyl-sn-glycero-3-phosphoethanolamine = an N-acyl-(4R)-4-hydroxysphinganine-1-phosphoethanolamine + a 1,2-diacyl-sn-glycerol. The catalysed reaction is 1,2-dihexadecanoyl-sn-glycero-3-phosphocholine + an N-acylsphing-4-enine = 1,2-dihexadecanoyl-sn-glycerol + a sphingomyelin. It catalyses the reaction 1-(9Z-octadecenoyl)-2-acyl-sn-3-glycerol + a sphingomyelin = a 1-(9Z-octadecenoyl)-2-acyl-sn-glycero-3-phosphocholine + an N-acylsphing-4-enine. It carries out the reaction N-hexadecanoylsphinganine + a 1,2-diacyl-sn-glycero-3-phosphocholine = N-hexadecanoyl-sphinganine-1-phosphocholine + a 1,2-diacyl-sn-glycerol. The enzyme catalyses N-hexadecanoyl-(4R)-hydroxysphinganine + a 1,2-diacyl-sn-glycero-3-phosphocholine = N-hexadecanoyl-(4R)-hydroxysphinganine-phosphocholine + a 1,2-diacyl-sn-glycerol. The catalysed reaction is N-hexadecanoylsphinganine + a 1,2-diacyl-sn-glycero-3-phosphoethanolamine = N-hexadecanoyl-sphinganine-1-phosphoethanolamine + a 1,2-diacyl-sn-glycerol. It catalyses the reaction N-hexadecanoyl-(4R)-hydroxysphinganine + a 1,2-diacyl-sn-glycero-3-phosphoethanolamine = N-hexadecanoyl-(4R)-hydroxysphinganine-1-phosphoethanolamine + a 1,2-diacyl-sn-glycerol. It functions in the pathway sphingolipid metabolism. Functionally, sphingomyelin synthase that primarily contributes to sphingomyelin synthesis and homeostasis at the plasma membrane. Catalyzes the reversible transfer of phosphocholine moiety in sphingomyelin biosynthesis: in the forward reaction transfers phosphocholine head group of phosphatidylcholine (PC) on to ceramide (CER) to form ceramide phosphocholine (sphingomyelin, SM) and diacylglycerol (DAG) as by-product, and in the reverse reaction transfers phosphocholine from SM to DAG to form PC and CER. The direction of the reaction appears to depend on the levels of CER and DAG in the plasma membrane. Does not use free phosphorylcholine or CDP-choline as donors. Can also transfer phosphoethanolamine head group of phosphatidylethanolamine (PE) on to ceramide (CER) to form ceramide phosphoethanolamine (CPE). Regulates receptor-mediated signal transduction via mitogenic DAG and proapoptotic CER, as well as via SM, a structural component of membrane rafts that serve as platforms for signal transduction and protein sorting. To a lesser extent, plays a role in secretory transport via regulation of DAG pool at the Golgi apparatus and its downstream effects on PRKD1. Required for normal bone matrix mineralization. This chain is Phosphatidylcholine:ceramide cholinephosphotransferase 2 (Sgms2), found in Mus musculus (Mouse).